Here is an 89-residue protein sequence, read N- to C-terminus: Small ribosomal subunit protein uS15 (89 aa).

Residues 1 to 21 show a composition bias toward basic and acidic residues; that stretch reads MAITQERKNQLINEFKTHESD. Positions 1 to 24 are disordered; it reads MAITQERKNQLINEFKTHESDTGS.

The protein belongs to the universal ribosomal protein uS15 family. Part of the 30S ribosomal subunit. Forms a bridge to the 50S subunit in the 70S ribosome, contacting the 23S rRNA.

One of the primary rRNA binding proteins, it binds directly to 16S rRNA where it helps nucleate assembly of the platform of the 30S subunit by binding and bridging several RNA helices of the 16S rRNA. Its function is as follows. Forms an intersubunit bridge (bridge B4) with the 23S rRNA of the 50S subunit in the ribosome. The polypeptide is Small ribosomal subunit protein uS15 (Bacillus subtilis (strain 168)).